The primary structure comprises 997 residues: FHIP family protein CPIJ015043 (997 aa).

Disordered regions lie at residues 558-579 and 759-922; these read DHRS…QQLQ and NVVL…GGAA. Residues 569-579 are compositionally biased toward low complexity; the sequence is QQHLHQQQQLQ. A compositionally biased stretch (gly residues) spans 763 to 780; that stretch reads GGSGPGGPRLSNGGGGTG. Low complexity-rich tracts occupy residues 781 to 792 and 830 to 889; these read SSITSSLSQTTP and GSNS…MVGS. Residues 911–922 show a composition bias toward gly residues; that stretch reads IGSGTVGGGGAA.

It belongs to the FHIP family.

The sequence is that of FHIP family protein CPIJ015043 from Culex quinquefasciatus (Southern house mosquito).